Reading from the N-terminus, the 681-residue chain is DNA ligase (681 aa).

Residues 45-49, 94-95, and Glu-120 each bind NAD(+); these read DFDFD and SL. Residue Lys-122 is the N6-AMP-lysine intermediate of the active site. Arg-143, Glu-177, Lys-289, and Lys-313 together coordinate NAD(+). Zn(2+) is bound by residues Cys-403, Cys-406, Cys-421, and Cys-426. The region spanning 593-681 is the BRCT domain; that stretch reads SDQQPFAGQS…SLKINFKNTI (89 aa).

The protein belongs to the NAD-dependent DNA ligase family. LigA subfamily. The cofactor is Mg(2+). Mn(2+) serves as cofactor.

It catalyses the reaction NAD(+) + (deoxyribonucleotide)n-3'-hydroxyl + 5'-phospho-(deoxyribonucleotide)m = (deoxyribonucleotide)n+m + AMP + beta-nicotinamide D-nucleotide.. Functionally, DNA ligase that catalyzes the formation of phosphodiester linkages between 5'-phosphoryl and 3'-hydroxyl groups in double-stranded DNA using NAD as a coenzyme and as the energy source for the reaction. It is essential for DNA replication and repair of damaged DNA. The chain is DNA ligase from Leptospira borgpetersenii serovar Hardjo-bovis (strain L550).